The sequence spans 169 residues: MLAAAPLAANAADGTITFNGKVTDKTCTISTPGGKDFAVNLPTVSKNTLATAGAVAGRTPFAINLTKCSAGNVATYFEPGSTVDFNTGRLLNQASANAATNVQLQLLGSNNQVLPIKAAGAGLAQTNSQWVTVGTDGSADLNYYAEYYATAAATPGDVTSSVKYTIIYN.

The N-terminal stretch at 1 to 11 (MLAAAPLAANA) is a signal peptide.

Belongs to the fimbrial protein family.

It is found in the fimbrium. Functionally, involved in adherence to eukaryotic epithelial cells and abiotic surfaces. Mediates agglutination of animal red blood cells. In Stenotrophomonas maltophilia (strain K279a), this protein is Major fimbrial subunit SMF-1.